We begin with the raw amino-acid sequence, 417 residues long: NADP-specific glutamate dehydrogenase A1 (417 aa).

The active site involves K105.

It belongs to the Glu/Leu/Phe/Val dehydrogenases family. In terms of assembly, homohexamer.

It carries out the reaction L-glutamate + NADP(+) + H2O = 2-oxoglutarate + NH4(+) + NADPH + H(+). The protein is NADP-specific glutamate dehydrogenase A1 (gdhA1) of Halobacterium salinarum (Halobacterium halobium).